The primary structure comprises 391 residues: uncharacterized protein (391 aa).

The protein belongs to the mimivirus L17x/L18x family.

This is an uncharacterized protein from Acanthamoeba polyphaga (Amoeba).